We begin with the raw amino-acid sequence, 977 residues long: SLIT and NTRK-like protein 3 (977 aa).

A signal peptide spans 1-26; the sequence is MKPSIAEMLHRGRMLWIILLSTIALG. Residues 29–654 lie on the Extracellular side of the membrane; sequence TPIPLIEDSE…SPPGGPVPLS (626 aa). N-linked (GlcNAc...) asparagine glycosylation is present at Asn68. LRR repeat units follow at residues 78–99, 102–123, 126–147, 150–171, 174–195, and 197–218; these read RPFKLYLQRNSMRKLYTNSFLH, NAVSINLGNNALQDIQTGAFNG, ILKRLYLHENKLDVFRNDTFLG, SLEYLQADYNVIKRIESGAFRN, KLRVLILNDNLIPMLPTNLFKA, and SLTHLDLRGNRLKVLFYRGMLD. The LRRCT 1 domain occupies 232 to 283; it reads NPWNCTCEIVQLKSWLERIPYTALVGDITCETPFHFHGKDLREIRKTELCPL. The tract at residues 325 to 360 is disordered; it reads EYKSSNKQPKPTKQPRTPRPPSTSQALYPGPNQPPI. Residues 364–406 form the LRRNT domain; it reads QTRPPIPIICPTGCTCNLHINDLGLTVNCKERGFNNISELLPR. 6 LRR repeats span residues 409–430, 433–454, 457–478, 481–502, 505–526, and 528–549; these read NAKKLYLSSNLIQKIYRSDFWN, SLDLLHLGNNRISYVQDGAFIN, NLKSLFLNGNDIEKLTPGMFRG, SLHYLYFEFNVIREIQPAAFSL, NLKLLFLNNNLLRTLPTDAFAG, and SLARLNLRKNYFLYLPVAGVLE. Residues 562–613 enclose the LRRCT 2 domain; that stretch reads NPWDCTCDLVPFKQWIETISSVSVVGDVLCRSPENLTHRDVRTIELEVLCPE. Asn596 carries N-linked (GlcNAc...) asparagine glycosylation. The helical transmembrane segment at 655–675 threads the bilayer; that stretch reads VLILSLLVLFFSAVFVAAGLF. The Cytoplasmic portion of the chain corresponds to 676–977; it reads AYVLRRRRKK…EVLEKTTYRF (302 aa). Disordered regions lie at residues 708-735 and 761-790; these read LFEDGGGGGGGSGGGGRPTLSSPEKAPP and EEEVAVSSAQEAGSAERGGPGTQPPGMGEA. The segment covering 711–724 has biased composition (gly residues); it reads DGGGGGGGSGGGGR. A compositionally biased stretch (low complexity) spans 765–775; it reads AVSSAQEAGSA.

Belongs to the SLITRK family. In terms of tissue distribution, expressed in the occipital lobe of the cerebral cortex of the brain. Expressed at higher levels in some astrocytic brain tumors such as astrocytomas, oligodendrogliomas, glioblastomas, gangliogliomas and primitive neuroectodermal tumors.

It is found in the membrane. Its function is as follows. Suppresses neurite outgrowth. The protein is SLIT and NTRK-like protein 3 (SLITRK3) of Homo sapiens (Human).